Reading from the N-terminus, the 165-residue chain is Small ribosomal subunit protein uS5 (165 aa).

The region spanning 10-73 (LKEKVVHINR…EDAKKNIVEV (64 aa)) is the S5 DRBM domain.

The protein belongs to the universal ribosomal protein uS5 family. In terms of assembly, part of the 30S ribosomal subunit. Contacts proteins S4 and S8.

With S4 and S12 plays an important role in translational accuracy. Functionally, located at the back of the 30S subunit body where it stabilizes the conformation of the head with respect to the body. The protein is Small ribosomal subunit protein uS5 of Clostridium botulinum (strain ATCC 19397 / Type A).